Reading from the N-terminus, the 431-residue chain is Adenylosuccinate synthetase (431 aa).

GTP contacts are provided by residues 13–19 and 41–43; these read GDEGKGK and GHT. Asp14 (proton acceptor) is an active-site residue. The Mg(2+) site is built by Asp14 and Gly41. IMP is bound by residues 14 to 17, 39 to 42, Thr130, Arg144, Gln225, Thr240, and Arg304; these read DEGK and NAGH. The Proton donor role is filled by His42. 300-306 contributes to the substrate binding site; it reads ATTGRKR. GTP-binding positions include Arg306, 332-334, and 415-417; these read KLD and STG.

It belongs to the adenylosuccinate synthetase family. Homodimer. Mg(2+) serves as cofactor.

The protein localises to the cytoplasm. The enzyme catalyses IMP + L-aspartate + GTP = N(6)-(1,2-dicarboxyethyl)-AMP + GDP + phosphate + 2 H(+). It functions in the pathway purine metabolism; AMP biosynthesis via de novo pathway; AMP from IMP: step 1/2. Functionally, plays an important role in the de novo pathway of purine nucleotide biosynthesis. Catalyzes the first committed step in the biosynthesis of AMP from IMP. The chain is Adenylosuccinate synthetase from Shewanella oneidensis (strain ATCC 700550 / JCM 31522 / CIP 106686 / LMG 19005 / NCIMB 14063 / MR-1).